A 1132-amino-acid polypeptide reads, in one-letter code: Rho GTPase-activating protein gacE (1132 aa).

Residues 76 to 262 (LEMNKILKSE…FLISNYLNVF (187 aa)) enclose the Rho-GAP domain. 2 disordered regions span residues 279-354 (NELL…SSPI) and 472-517 (NSTT…SLIN). Residues 281-301 (LLNNNNNNNNVIMPTTTTTTT) show a composition bias toward low complexity. A compositionally biased stretch (polar residues) spans 302–311 (SASSSILPTD). 3 stretches are compositionally biased toward low complexity: residues 328–354 (SIPLSSIGSSSTSPIISPSSSSSSSPI), 473–498 (STTTTTTSTSTSTSTSTSTSTSSTTT), and 507–517 (SNSASNNSLIN).

It localises to the cytoplasm. In terms of biological role, rho GTPase-activating protein involved in the signal transduction pathway. In Dictyostelium discoideum (Social amoeba), this protein is Rho GTPase-activating protein gacE (gacE).